Here is a 279-residue protein sequence, read N- to C-terminus: Probable endonuclease 4 (279 aa).

Residues His66, His106, Glu142, Asp176, His179, His213, Asp226, His228, and Glu258 each contribute to the Zn(2+) site.

The protein belongs to the AP endonuclease 2 family. Requires Zn(2+) as cofactor.

The catalysed reaction is Endonucleolytic cleavage to 5'-phosphooligonucleotide end-products.. Functionally, endonuclease IV plays a role in DNA repair. It cleaves phosphodiester bonds at apurinic or apyrimidinic (AP) sites, generating a 3'-hydroxyl group and a 5'-terminal sugar phosphate. The polypeptide is Probable endonuclease 4 (Photobacterium profundum (strain SS9)).